The primary structure comprises 394 residues: Methionine import ATP-binding protein MetN 2 (394 aa).

Residues 39 to 278 enclose the ABC transporter domain; the sequence is VSLEQVGKVF…PRHGATRALL (240 aa). Residue 75 to 82 coordinates ATP; it reads GRSGAGKS.

The protein belongs to the ABC transporter superfamily. Methionine importer (TC 3.A.1.24) family. In terms of assembly, the complex is composed of two ATP-binding proteins (MetN), two transmembrane proteins (MetI) and a solute-binding protein (MetQ).

The protein localises to the cell inner membrane. The enzyme catalyses L-methionine(out) + ATP + H2O = L-methionine(in) + ADP + phosphate + H(+). The catalysed reaction is D-methionine(out) + ATP + H2O = D-methionine(in) + ADP + phosphate + H(+). Functionally, part of the ABC transporter complex MetNIQ involved in methionine import. Responsible for energy coupling to the transport system. In Burkholderia cenocepacia (strain HI2424), this protein is Methionine import ATP-binding protein MetN 2.